The primary structure comprises 162 residues: General odorant-binding protein 2 (162 aa).

The signal sequence occupies residues 1–18 (MTSKSCLLLVAMVTLTTS). Disulfide bonds link Cys-40-Cys-75, Cys-71-Cys-129, and Cys-118-Cys-138.

The protein belongs to the PBP/GOBP family. In terms of tissue distribution, antenna.

In terms of biological role, present in the aqueous fluid surrounding olfactory sensory dendrites and are thought to aid in the capture and transport of hydrophobic odorants into and through this fluid. The polypeptide is General odorant-binding protein 2 (Heliothis virescens (Tobacco budworm moth)).